Here is an 85-residue protein sequence, read N- to C-terminus: UPF0297 protein CD630_12830 (85 aa).

The protein belongs to the UPF0297 family.

This Clostridioides difficile (strain 630) (Peptoclostridium difficile) protein is UPF0297 protein CD630_12830.